The following is a 40-amino-acid chain: Photosystem II reaction center protein L (40 aa).

Residues 19–39 (SLYWGLLLIFVLAVLFSNYFF) traverse the membrane as a helical segment.

It belongs to the PsbL family. In terms of assembly, PSII is composed of 1 copy each of membrane proteins PsbA, PsbB, PsbC, PsbD, PsbE, PsbF, PsbH, PsbI, PsbJ, PsbK, PsbL, PsbM, PsbT, PsbX, PsbY, PsbZ, Psb30/Ycf12, at least 3 peripheral proteins of the oxygen-evolving complex and a large number of cofactors. It forms dimeric complexes.

Its subcellular location is the plastid. It is found in the chloroplast thylakoid membrane. Its function is as follows. One of the components of the core complex of photosystem II (PSII). PSII is a light-driven water:plastoquinone oxidoreductase that uses light energy to abstract electrons from H(2)O, generating O(2) and a proton gradient subsequently used for ATP formation. It consists of a core antenna complex that captures photons, and an electron transfer chain that converts photonic excitation into a charge separation. This subunit is found at the monomer-monomer interface and is required for correct PSII assembly and/or dimerization. This Nandina domestica (Heavenly bamboo) protein is Photosystem II reaction center protein L.